The primary structure comprises 636 residues: Eukaryotic peptide chain release factor GTP-binding subunit ERF3A (636 aa).

2 stretches are compositionally biased toward gly residues: residues 1 to 16 (MDPSSGGGGGGGGGGS) and 103 to 116 (AAGGDHGAGSGAGG). 2 disordered regions span residues 1 to 54 (MDPS…AAVA) and 90 to 206 (LRGP…PPGA). The span at 121-138 (VESSQDQSCEGSNSTVSM) shows a compositional bias: polar residues. Acidic residues predominate over residues 183–193 (STQEMMEEEEE). Residues 209-435 (KEHVNVVFIG…DNLPNFNRSV (227 aa)) form the tr-type G domain. Positions 218–225 (GHVDAGKS) are G1. Residue 221–226 (DAGKST) coordinates GTP. A G2 region spans residues 274-278 (GKTVE). The segment at 295 to 298 (DAPG) is G3. Residues 357–360 (NKMD) and 399–401 (SGL) contribute to the GTP site. Positions 357-360 (NKMD) are G4. Residues 399–401 (SGL) form a G5 region.

The protein belongs to the TRAFAC class translation factor GTPase superfamily. Classic translation factor GTPase family. ERF3 subfamily. Component of the eRF1-eRF3-GTP ternary complex, composed of ETF1/ERF1 and ERF3 (GSPT1/ERF3A or GSPT2/ERF3B) and GTP. Component of the transient SURF (SMG1-UPF1-eRF1-eRF3) complex. The ETF1-GSPT1 complex interacts with JMJD4. Interacts with PABPC1. Interacts with SHFL.

The catalysed reaction is GTP + H2O = GDP + phosphate + H(+). GTPase component of the eRF1-eRF3-GTP ternary complex, a ternary complex that mediates translation termination in response to the termination codons UAA, UAG and UGA. GSPT1/ERF3A mediates ETF1/ERF1 delivery to stop codons: The eRF1-eRF3-GTP complex binds to a stop codon in the ribosomal A-site. GTP hydrolysis by GSPT1/ERF3A induces a conformational change that leads to its dissociation, permitting ETF1/ERF1 to accommodate fully in the A-site. Component of the transient SURF complex which recruits UPF1 to stalled ribosomes in the context of nonsense-mediated decay (NMD) of mRNAs containing premature stop codons. Required for SHFL-mediated translation termination which inhibits programmed ribosomal frameshifting (-1PRF) of mRNA from viruses and cellular genes. This chain is Eukaryotic peptide chain release factor GTP-binding subunit ERF3A (Gspt1), found in Mus musculus (Mouse).